A 450-amino-acid chain; its full sequence is Glutamyl-tRNA(Gln) amidotransferase subunit A, mitochondrial (450 aa).

Active-site charge relay system residues include lysine 47 and serine 122. Serine 146 acts as the Acyl-ester intermediate in catalysis.

The protein belongs to the amidase family. GatA subfamily. Subunit of the heterotrimeric GatFAB amidotransferase (AdT) complex, composed of A, B and F subunits.

The protein resides in the mitochondrion. The enzyme catalyses L-glutamyl-tRNA(Gln) + L-glutamine + ATP + H2O = L-glutaminyl-tRNA(Gln) + L-glutamate + ADP + phosphate + H(+). In terms of biological role, allows the formation of correctly charged Gln-tRNA(Gln) through the transamidation of misacylated Glu-tRNA(Gln) in the mitochondria. The reaction takes place in the presence of glutamine and ATP through an activated gamma-phospho-Glu-tRNA(Gln). This is Glutamyl-tRNA(Gln) amidotransferase subunit A, mitochondrial from Candida albicans (strain WO-1) (Yeast).